The sequence spans 311 residues: Probable mitochondrial phosphate carrier protein (311 aa).

The Mitochondrial intermembrane portion of the chain corresponds to 1–23 (MSTPLIPPAPPKKTLQLYTPQYY). Solcar repeat units lie at residues 21-105 (QYYG…FKHK), 118-203 (YRTS…IVEA), and 219-303 (EKIG…FKIM). Residues 24–44 (GLCTLGGLLACGTTHSAITPL) form a helical membrane-spanning segment. At 45-67 (DLIKCRKQVNPNIYPGNIAGFKT) the chain is on the mitochondrial matrix side. The chain crosses the membrane as a helical span at residues 68-88 (ILSKEGLRGLYTGGMPTLIGY). Residues 89–120 (SLQGCGKYGFYELFKHKYSTLVGAQKAHEYRT) are Mitochondrial intermembrane-facing. Residues 121–141 (SIYLAASASAELLADIMLCPM) form a helical membrane-spanning segment. Over 142 to 171 (EAIKVRVQTSNPRFANTTREAWSKIVTNEG) the chain is Mitochondrial matrix. A helical membrane pass occupies residues 172–192 (FGTLYRGLAPLWFRQIPYTMM). Residues 193 to 220 (KFASFERIVEALYTYIGKPKNMYSKAEK) lie on the Mitochondrial intermembrane side of the membrane. The helical transmembrane segment at 221 to 241 (IGISFAGGYMAGVLCAIISHP) threads the bilayer. At 242–269 (ADVMVSKLNSNKKAGEGAGAAAARIYKE) the chain is on the mitochondrial matrix side. The chain crosses the membrane as a helical span at residues 270–290 (IGFSGLWNGLGVRIVMIGTLT). Over 291–311 (GAQWLIYDSFKIMCGFPATGA) the chain is Mitochondrial intermembrane.

This sequence belongs to the mitochondrial carrier (TC 2.A.29) family.

It localises to the mitochondrion inner membrane. Transport of phosphate groups from the cytosol to the mitochondrial matrix. The sequence is that of Probable mitochondrial phosphate carrier protein from Schizosaccharomyces pombe (strain 972 / ATCC 24843) (Fission yeast).